A 105-amino-acid polypeptide reads, in one-letter code: Ig lambda chain C region (105 aa).

One can recognise an Ig-like domain in the interval Pro2–Thr100. Cys27 and Cys86 are oxidised to a cystine.

This Sus scrofa (Pig) protein is Ig lambda chain C region.